Reading from the N-terminus, the 486-residue chain is UDP-N-acetylmuramate--L-alanine ligase (486 aa).

ATP is bound at residue 129–135; that stretch reads GTHGKTT.

This sequence belongs to the MurCDEF family.

Its subcellular location is the cytoplasm. The enzyme catalyses UDP-N-acetyl-alpha-D-muramate + L-alanine + ATP = UDP-N-acetyl-alpha-D-muramoyl-L-alanine + ADP + phosphate + H(+). It functions in the pathway cell wall biogenesis; peptidoglycan biosynthesis. Functionally, cell wall formation. This Vibrio cholerae serotype O1 (strain ATCC 39315 / El Tor Inaba N16961) protein is UDP-N-acetylmuramate--L-alanine ligase.